A 366-amino-acid chain; its full sequence is MKPIVCDKGHGMVQAGFAGDEAPKVVFPCVVGRPRDGLNPNESYVGEEGHANRDILTLKDPMEHGIVNNWDDMEKIWHYTFYNELRVDPEEHPVLLTEAPYNPKANREKMTQIMFESFDVPAMYVSMQSVLYLYSSGRTTGVVLDLGERVSHTVPVYEGYALPHGILRLDLGGRDLTDYLIEIMTERGYTYTTSAEREIVRDIKEKLCYVALDYEQEMEKTTKGWTIDKTYVLPDGQEITIEAERFMCPEVLFQPSVIGKESSGIHEATRNSILKCPVDTRRDMYGNILMTGGTTMLHGIKERMTKELNALVPSSMKVKVVVPPESECSVWIGGSILASLSTFHQMWITKDEYEEHGAAIVHRKCV.

It belongs to the actin family. As to quaternary structure, polymerization of globular actin (G-actin) leads to a structural filament (F-actin) in the form of a two-stranded helix. The binding of profilin to monomeric G-actin cause the sequestration of actin into profilactin complexes, and prevents the polymerization.

The protein localises to the cytoplasm. It is found in the cytoskeleton. In terms of biological role, actins are highly conserved proteins that are involved in various types of cell motility and are ubiquitously expressed in all eukaryotic cells. Essential component of cell cytoskeleton; plays an important role in cytoplasmic streaming, cell shape determination, cell division, organelle movement and extension growth. This chain is Putative actin-9 (ACT9), found in Arabidopsis thaliana (Mouse-ear cress).